We begin with the raw amino-acid sequence, 691 residues long: Calcium-binding and coiled-coil domain-containing protein 1 (691 aa).

A p300 KIX-binding region spans residues 1 to 30 (MEESPLSRAPSRGGVNFLNVARTYIPNTKV). The segment at 1–190 (MEESPLSRAP…VQELERALAT (190 aa)) is N-terminal AD (CTNNB1 binding site). Ser4 is modified (phosphoserine). An interaction with GATA1 region spans residues 45 to 125 (SDWIGIFKVE…FQFREPRPMD (81 aa)). Coiled-coil stretches lie at residues 145 to 205 (KATV…YKGI), 232 to 339 (ELED…AELE), and 417 to 514 (QSVE…ADEK). The interval 501–691 (RKLEARLEKV…FSTQDPFTFE (191 aa)) is C-terminal AD (CTNNB1 binding site); interaction with CCAR1. The segment at 513–604 (EKWNEDATTE…SDSEAEDEKS (92 aa)) is disordered. A UBZ1-type zinc finger spans residues 653 to 679 (WKECPICKERFPAESDKDALEDHMDGH). Zn(2+) is bound by residues Cys656, Cys659, His675, and His679.

This sequence belongs to the CALCOCO family. Part of a calphoglin complex consisting of CALCOCO1, PPA1 and PGM. Interacts with the bHLH-PAS domains of GRIP1, AHR and ARNT. Interacts with CTNNB1 via both its N- and C-terminal regions. Interacts with EP300. Interacts with CCAR1 (via N-terminus) and GATA1.

Its subcellular location is the cytoplasm. It localises to the nucleus. In terms of biological role, functions as a coactivator for aryl hydrocarbon and nuclear receptors (NR). Recruited to promoters through its contact with the N-terminal basic helix-loop-helix-Per-Arnt-Sim (PAS) domain of transcription factors or coactivators, such as NCOA2. During ER-activation acts synergistically in combination with other NCOA2-binding proteins, such as EP300, CREBBP and CARM1. Involved in the transcriptional activation of target genes in the Wnt/CTNNB1 pathway. Functions as a secondary coactivator in LEF1-mediated transcriptional activation via its interaction with CTNNB1. Coactivator function for nuclear receptors and LEF1/CTNNB1 involves differential utilization of two different activation regions. In association with CCAR1 enhances GATA1- and MED1-mediated transcriptional activation from the gamma-globin promoter during erythroid differentiation of K562 erythroleukemia cells. Its function is as follows. Seems to enhance inorganic pyrophosphatase thus activating phosphogluomutase (PMG). Probably functions as a component of the calphoglin complex, which is involved in linking cellular metabolism (phosphate and glucose metabolism) with other core functions including protein synthesis and degradation, calcium signaling and cell growth. In Pongo abelii (Sumatran orangutan), this protein is Calcium-binding and coiled-coil domain-containing protein 1 (CALCOCO1).